A 657-amino-acid chain; its full sequence is Serine/threonine-protein kinase BUR1 (657 aa).

The 307-residue stretch at 60–366 folds into the Protein kinase domain; it reads YREDEKLGQG…AMSAKHHPWF (307 aa). ATP is bound by residues 66–74 and K89; that span reads LGQGTFGEV. D195 (proton acceptor) is an active-site residue. A Phosphothreonine; by CAK modification is found at T240. S400 bears the Phosphoserine mark. A Phosphothreonine modification is found at T405. The disordered stretch occupies residues 414–657; it reads KGESPVVKNL…FQNSDIADLY (244 aa). S417 is modified (phosphoserine). Residues 489 to 501 show a composition bias toward low complexity; the sequence is NNSSRNNRFSGNS. Polar residues-rich tracts occupy residues 535-552, 564-595, and 614-625; these read SRYQ…SPND, PETN…NGSR, and ISPSQGQHQLTS. Basic and acidic residues predominate over residues 627-649; that stretch reads PIEKKNGSFKDERAKPDESKEFQ. S634 carries the post-translational modification Phosphoserine.

It belongs to the protein kinase superfamily. CMGC Ser/Thr protein kinase family. CDC2/CDKX subfamily. Belongs to the BUR kinase complex composed of SGV1/BUR1 and BUR2. Interacts with BUR2 and RBP1.

The protein resides in the nucleus. It carries out the reaction L-seryl-[protein] + ATP = O-phospho-L-seryl-[protein] + ADP + H(+). The enzyme catalyses L-threonyl-[protein] + ATP = O-phospho-L-threonyl-[protein] + ADP + H(+). The catalysed reaction is [DNA-directed RNA polymerase] + ATP = phospho-[DNA-directed RNA polymerase] + ADP + H(+). In terms of biological role, serine/threonine-protein kinase component of the BUR kinase complex involved in transcription regulation. This complex phosphorylates 'Ser-120' of the UBC2/RAD6 ubiquitin-conjugating enzyme (E2), leading to monoubiquitination of histone H2B, the localization of the PAF1 complex to the chromatin, and the silencing of telomeric-associated genes. Also required for histone H3 'Lys-4' trimethylation. May phosphorylate the 'Ser-5' of the RBP1 carboxy-terminal domain (CTD) repeats. Necessary for the recovery from pheromone-induced growth arrest in the cell cycle G1 phase. The kinase activity of the complex requires the presence of BUR2. The sequence is that of Serine/threonine-protein kinase BUR1 (SGV1) from Saccharomyces cerevisiae (strain ATCC 204508 / S288c) (Baker's yeast).